The following is a 388-amino-acid chain: Flavin oxidoreductase hxnT (388 aa).

This sequence belongs to the NADH:flavin oxidoreductase/NADH oxidase family. The cofactor is FMN.

In terms of biological role, flavin oxidoreductase, part of the hnx cluster involved in the purine degradation. The nicotinate hydroxylase hnxS accepts nicotinate as a substrate and catalyzes the first step of nicotinate catabolism. The major facilitator-type transporters hxnP and hxnZ are probably involved in the uptake of nicotinate-derived metabolites, and the oxidoreductases hxnT and hxnY in the further metabolism of 6-OH nicotinic acid. In Emericella nidulans (strain FGSC A4 / ATCC 38163 / CBS 112.46 / NRRL 194 / M139) (Aspergillus nidulans), this protein is Flavin oxidoreductase hxnT.